The sequence spans 308 residues: Aspartate carbamoyltransferase catalytic subunit (308 aa).

Positions 57 and 58 each coordinate carbamoyl phosphate. An L-aspartate-binding site is contributed by K86. Residues R107, H135, and Q138 each contribute to the carbamoyl phosphate site. Residues R168 and R229 each contribute to the L-aspartate site. 2 residues coordinate carbamoyl phosphate: L268 and P269.

This sequence belongs to the aspartate/ornithine carbamoyltransferase superfamily. ATCase family. As to quaternary structure, heterooligomer of catalytic and regulatory chains.

The enzyme catalyses carbamoyl phosphate + L-aspartate = N-carbamoyl-L-aspartate + phosphate + H(+). It functions in the pathway pyrimidine metabolism; UMP biosynthesis via de novo pathway; (S)-dihydroorotate from bicarbonate: step 2/3. Its function is as follows. Catalyzes the condensation of carbamoyl phosphate and aspartate to form carbamoyl aspartate and inorganic phosphate, the committed step in the de novo pyrimidine nucleotide biosynthesis pathway. This is Aspartate carbamoyltransferase catalytic subunit from Pyrococcus abyssi (strain GE5 / Orsay).